The following is a 123-amino-acid chain: Thioredoxin domain-containing protein 17 (123 aa).

Alanine 2 carries the N-acetylalanine modification. Residues 41–123 enclose the Thioredoxin domain; that stretch reads SWCPDCVQAE…NLVEMLFSED (83 aa). Residues cysteine 43 and cysteine 46 each act as nucleophile in the active site. An intrachain disulfide couples cysteine 43 to cysteine 46.

This sequence belongs to the thioredoxin family. In terms of assembly, interacts with TRXR1 and DYNLL1/DNCL1. Post-translationally, the oxidized protein is reduced by TRXR1. As to expression, ubiquitously expressed in cell lines.

It is found in the cytoplasm. Disulfide reductase. May participate in various redox reactions through the reversible oxidation of its active center dithiol to a disulfide and catalyze dithiol-disulfide exchange reactions. Modulates TNF-alpha signaling and NF-kappa-B activation. Has peroxidase activity and may contribute to the elimination of cellular hydrogen peroxide. The sequence is that of Thioredoxin domain-containing protein 17 (TXNDC17) from Homo sapiens (Human).